A 306-amino-acid chain; its full sequence is MVGKLPIMAETNENDLPVIDLAQIEGYVVDDSDEDDPVLLRPDGTPIETWREDFPYEERVTREDYEKVKRSLQIELLKWQNWTKETGQRHIILFEGRDAAGKGGTIKRFNEHLNPRGARTVALEKPSPRESTSWYFQRYIQHFPAAGEIVFFDRSWYNRSGVERVMGFCTESQHAEFLREVPMLENMILGSGISLTKFWFSVTRKEQRTRFAIRQVDPVRQWKLSPMDLASLDRWDDYTRAKEEQFRYTDTDESPWITIKSNDKKRARINAMRYVLSKFDYTDKDYELVGEPDPKVVLRGRDQIGD.

This sequence belongs to the polyphosphate kinase 2 (PPK2) family. Class I subfamily. Homotetramer. The cofactor is Mn(2+).

It catalyses the reaction [phosphate](n) + ATP = [phosphate](n+1) + ADP. The catalysed reaction is [phosphate](n) + GTP = [phosphate](n+1) + GDP. In terms of biological role, catalyzes the synthesis of polyP from ATP or GTP. Can also use inorganic polyphosphate (polyP) as a donor to convert ADP to ATP, but the activity is 10-fold higher in vitro for polyP synthesis than for ATP formation. The protein is Polyphosphate kinase PPK2B of Corynebacterium glutamicum (strain ATCC 13032 / DSM 20300 / JCM 1318 / BCRC 11384 / CCUG 27702 / LMG 3730 / NBRC 12168 / NCIMB 10025 / NRRL B-2784 / 534).